The following is a 412-amino-acid chain: Class E basic helix-loop-helix protein 40 (412 aa).

An essential for interaction with BMAL1, E-box binding and repressor activity against the CLOCK-BMAL1 heterodimer region spans residues 1–139; sequence MERIPSAQPP…LSGRNVETGQ (139 aa). A bHLH domain is found at 52 to 107; that stretch reads TYKLPHRLIEKKRRDRINECIAQLKDLLPEHLKLTTLGHLEKAVVLELTLKHVKAL. A necessary for interaction with RXRA and repressor activity against RXRA region spans residues 75–79; sequence LKDLL. Residues 142–175 form the Orange domain; sequence FCSGFQTCAREVLQYLAKHENTRDLKSSQLVTHL. K159 participates in a covalent cross-link: Glycyl lysine isopeptide (Lys-Gly) (interchain with G-Cter in SUMO1, SUMO2 and SUMO3). K167 participates in a covalent cross-link: Glycyl lysine isopeptide (Lys-Gly) (interchain with G-Cter in SUMO2). The segment at 182 to 303 is disordered; sequence LLQGGTSRKP…LSDDEGHFTS (122 aa). A Phosphoserine modification is found at S235. Residues 248–271 are compositionally biased toward basic and acidic residues; it reads ESEKGDLRSEQPCFKSDHGRRFTM. A Glycyl lysine isopeptide (Lys-Gly) (interchain with G-Cter in SUMO1); alternate cross-link involves residue K279. K279 participates in a covalent cross-link: Glycyl lysine isopeptide (Lys-Gly) (interchain with G-Cter in SUMO1, SUMO2 and SUMO3); alternate. K279 participates in a covalent cross-link: Glycyl lysine isopeptide (Lys-Gly) (interchain with G-Cter in SUMO2); alternate. K288 participates in a covalent cross-link: Glycyl lysine isopeptide (Lys-Gly) (interchain with G-Cter in SUMO2). The residue at position 383 (S383) is a Phosphoserine.

Homodimer. Heterodimer with BHLHE41/DEC2. Interacts with TCF3/E47. Interacts with ubiquitin-conjugating enzyme UBE2I/UBC9. Interacts with HDAC1, SUMO1, RXRA and BMAL1. Post-translationally, ubiquitinated; which may lead to proteasomal degradation. Sumoylation inhibits its ubiquitination and promotes its negative regulation of the CLOCK-BMAL1 heterodimer transcriptional activator activity. Expressed in cartilage, spleen, intestine, lung, and to a lesser extent in heart, brain, liver, muscle and stomach.

The protein localises to the cytoplasm. It localises to the nucleus. Functionally, transcriptional repressor involved in the regulation of the circadian rhythm by negatively regulating the activity of the clock genes and clock-controlled genes. Acts as the negative limb of a novel autoregulatory feedback loop (DEC loop) which differs from the one formed by the PER and CRY transcriptional repressors (PER/CRY loop). Both these loops are interlocked as it represses the expression of PER1/2 and in turn is repressed by PER1/2 and CRY1/2. Represses the activity of the circadian transcriptional activator: CLOCK-BMAL1|BMAL2 heterodimer by competing for the binding to E-box elements (5'-CACGTG-3') found within the promoters of its target genes. Negatively regulates its own expression and the expression of DBP and BHLHE41/DEC2. Acts as a corepressor of RXR and the RXR-LXR heterodimers and represses the ligand-induced RXRA and NR1H3/LXRA transactivation activity. May be involved in the regulation of chondrocyte differentiation via the cAMP pathway. Represses the transcription of NR0B2 and attentuates the transactivation of NR0B2 by the CLOCK-BMAL1 complex. Drives the circadian rhythm of blood pressure through transcriptional repression of ATP1B1 in the cardiovascular system. This is Class E basic helix-loop-helix protein 40 (BHLHE40) from Homo sapiens (Human).